Consider the following 464-residue polypeptide: Probable 1,4-beta-D-glucan cellobiohydrolase C (464 aa).

The N-terminal stretch at 1–19 is a signal peptide; sequence MKNFAPSLALSLLLPTVQA. One can recognise a CBM1 domain in the interval 20–55; that stretch reads QQTMWGQCGGAGWSGATDCVAGGVCSTQNAYYAQCL. Disulfide bonds link C27/C44 and C38/C54. Positions 59–102 are thr-rich linker; that stretch reads TTATTLSTTSKGTTTTTTSSTTSTGGGSSSTTTKTSTSAGPTVT. The span at 65–100 shows a compositional bias: low complexity; sequence STTSKGTTTTTTSSTTSTGGGSSSTTTKTSTSAGPT. The disordered stretch occupies residues 65–108; it reads STTSKGTTTTTTSSTTSTGGGSSSTTTKTSTSAGPTVTGSPSGN. Residues 103–464 form a catalytic region; that stretch reads GSPSGNPFSG…QLLTNANPAF (362 aa). D194 is a catalytic residue. 2 disulfide bridges follow: C195–C254 and C386–C433. The active-site Proton donor is D240. D419 (nucleophile) is an active-site residue.

Belongs to the glycosyl hydrolase 6 (cellulase B) family.

Its subcellular location is the secreted. The enzyme catalyses Hydrolysis of (1-&gt;4)-beta-D-glucosidic linkages in cellulose and cellotetraose, releasing cellobiose from the non-reducing ends of the chains.. The biological conversion of cellulose to glucose generally requires three types of hydrolytic enzymes: (1) Endoglucanases which cut internal beta-1,4-glucosidic bonds; (2) Exocellobiohydrolases that cut the disaccharide cellobiose from the non-reducing end of the cellulose polymer chain; (3) Beta-1,4-glucosidases which hydrolyze the cellobiose and other short cello-oligosaccharides to glucose. The protein is Probable 1,4-beta-D-glucan cellobiohydrolase C (cbhC) of Aspergillus clavatus (strain ATCC 1007 / CBS 513.65 / DSM 816 / NCTC 3887 / NRRL 1 / QM 1276 / 107).